We begin with the raw amino-acid sequence, 156 residues long: uncharacterized protein (156 aa).

This is an uncharacterized protein from Saccharolobus islandicus (Sulfolobus islandicus).